We begin with the raw amino-acid sequence, 121 residues long: Small ribosomal subunit protein uS13 (121 aa).

A disordered region spans residues 92–121 (RKGLPCRGQRTRTNARTRKGPRKAAQSLKK).

The protein belongs to the universal ribosomal protein uS13 family. Part of the 30S ribosomal subunit. Forms a loose heterodimer with protein S19. Forms two bridges to the 50S subunit in the 70S ribosome.

Its function is as follows. Located at the top of the head of the 30S subunit, it contacts several helices of the 16S rRNA. In the 70S ribosome it contacts the 23S rRNA (bridge B1a) and protein L5 of the 50S subunit (bridge B1b), connecting the 2 subunits; these bridges are implicated in subunit movement. Contacts the tRNAs in the A and P-sites. In Janthinobacterium sp. (strain Marseille) (Minibacterium massiliensis), this protein is Small ribosomal subunit protein uS13.